The chain runs to 274 residues: Ribonucleoside-diphosphate reductase small chain (274 aa).

Fe cation contacts are provided by Asp70, Glu101, and His104. The active site involves Tyr108. Positions 163, 197, and 200 each coordinate Fe cation.

It belongs to the ribonucleoside diphosphate reductase small chain family. In terms of assembly, heterodimer of a large and a small chain. Requires Fe cation as cofactor.

It catalyses the reaction a 2'-deoxyribonucleoside 5'-diphosphate + [thioredoxin]-disulfide + H2O = a ribonucleoside 5'-diphosphate + [thioredoxin]-dithiol. Ribonucleoside-diphosphate reductase holoenzyme provides the precursors necessary for viral DNA synthesis. Allows virus growth in non-dividing cells. Catalyzes the biosynthesis of deoxyribonucleotides from the corresponding ribonucleotides. The chain is Ribonucleoside-diphosphate reductase small chain from Sus scrofa (Pig).